A 560-amino-acid polypeptide reads, in one-letter code: Eukaryotic translation initiation factor 3 subunit D-1 (560 aa).

Residues 98 to 166 (VQKPPHQRGR…RGPPPKMRES (69 aa)) form a disordered region. Basic residues predominate over residues 100–121 (KPPHQRGRFRNMRNSRSGRGRN). Thr-128 carries the phosphothreonine modification. Over residues 147-156 (GRGMGKKFGH) the composition is skewed to basic residues. The segment at 291 to 305 (EFDLLTVNESSVEPP) is RNA gate.

This sequence belongs to the eIF-3 subunit D family. In terms of assembly, component of the eukaryotic translation initiation factor 3 (eIF-3) complex. The eIF-3 complex interacts with pix.

It is found in the cytoplasm. MRNA cap-binding component of the eukaryotic translation initiation factor 3 (eIF-3) complex, which is involved in protein synthesis of a specialized repertoire of mRNAs and, together with other initiation factors, stimulates binding of mRNA and methionyl-tRNAi to the 40S ribosome. The eIF-3 complex specifically targets and initiates translation of a subset of mRNAs involved in cell proliferation. In the eIF-3 complex, eif3d specifically recognizes and binds the 7-methylguanosine cap of a subset of mRNAs. The polypeptide is Eukaryotic translation initiation factor 3 subunit D-1 (Drosophila sechellia (Fruit fly)).